Here is a 504-residue protein sequence, read N- to C-terminus: Maturase K (504 aa).

The protein belongs to the intron maturase 2 family. MatK subfamily.

The protein resides in the plastid. It is found in the chloroplast. Usually encoded in the trnK tRNA gene intron. Probably assists in splicing its own and other chloroplast group II introns. The protein is Maturase K of Gossypium turneri (Cotton).